Reading from the N-terminus, the 250-residue chain is Probable transcriptional regulatory protein PERMA_0079 (250 aa).

It belongs to the TACO1 family.

It localises to the cytoplasm. The sequence is that of Probable transcriptional regulatory protein PERMA_0079 from Persephonella marina (strain DSM 14350 / EX-H1).